The following is a 1398-amino-acid chain: Pyrolysin (1398 aa).

Residues 1–26 (MNKKGLTVLFIAIMLLSVVPVHFVSA) form the signal peptide. Residues 27–149 (GTPPVSSENS…KTKEPSLEPK (123 aa)) constitute a propeptide that is removed on maturation. N-linked (GlcNAc...) asparagine glycosylation is present at asparagine 152. The Peptidase S8 domain maps to 154–656 (TWVINALQFI…HGLVNVTKSW (503 aa)). Aspartate 179 acts as the Charge relay system in catalysis. Residues asparagine 222, asparagine 228, asparagine 240, asparagine 257, asparagine 262, asparagine 298, and asparagine 327 are each glycosylated (N-linked (GlcNAc...) asparagine). The active-site Charge relay system is histidine 365. The N-linked (GlcNAc...) asparagine glycan is linked to asparagine 406. Serine 590 (charge relay system) is an active-site residue. N-linked (GlcNAc...) asparagine glycosylation is found at asparagine 651, asparagine 663, asparagine 739, asparagine 792, asparagine 893, asparagine 908, asparagine 917, asparagine 929, asparagine 1048, asparagine 1056, asparagine 1084, asparagine 1117, asparagine 1133, asparagine 1140, asparagine 1148, asparagine 1208, asparagine 1233, asparagine 1237, and asparagine 1332.

The protein belongs to the peptidase S8 family. Post-translationally, LWM pyrolysin seems to be produced by autoproteolytic activation of HMW pyrolysin. In terms of processing, glycosylated.

The protein resides in the cell envelope. Its function is as follows. Has endopeptidase activity toward caseins, casein fragments including alpha-S1-casein and synthetic peptides. The chain is Pyrolysin (pls) from Pyrococcus furiosus (strain ATCC 43587 / DSM 3638 / JCM 8422 / Vc1).